We begin with the raw amino-acid sequence, 269 residues long: UPF0524 protein C3orf70 homolog A (269 aa).

Disordered regions lie at residues 139 to 203 (VQRP…DSGI) and 215 to 249 (DEDS…QDEC). A compositionally biased stretch (pro residues) spans 141 to 150 (RPPPPTPNPT). Over residues 151-164 (HQPQTAAPQPVPQR) the composition is skewed to low complexity. Residues 179 to 191 (QAKEKISAPKMDH) are compositionally biased toward basic and acidic residues. Over residues 215–233 (DEDSCVDDDDEEEEDDELS) the composition is skewed to acidic residues.

The protein belongs to the UPF0524 family.

Plays a role in neuronal and neurobehavioral development. Required for normal expression of neuronal markers elavl3 and eno2 and neurobehaviors related to circadian rhythm and changes in light-dark conditions. This is UPF0524 protein C3orf70 homolog A from Danio rerio (Zebrafish).